Here is a 462-residue protein sequence, read N- to C-terminus: tRNA modification GTPase MnmE (462 aa).

Residues arginine 34, glutamate 92, and lysine 131 each coordinate (6S)-5-formyl-5,6,7,8-tetrahydrofolate. Residues 227–386 (GLQVVIAGKP…LIDAITAHAG (160 aa)) enclose the TrmE-type G domain. Asparagine 237 is a binding site for K(+). GTP-binding positions include 237–242 (NAGKSS), 256–262 (TDIAGTT), and 281–284 (DTAG). Serine 241 provides a ligand contact to Mg(2+). 3 residues coordinate K(+): threonine 256, isoleucine 258, and threonine 261. Threonine 262 is a Mg(2+) binding site. Lysine 462 contributes to the (6S)-5-formyl-5,6,7,8-tetrahydrofolate binding site.

Belongs to the TRAFAC class TrmE-Era-EngA-EngB-Septin-like GTPase superfamily. TrmE GTPase family. In terms of assembly, homodimer. Heterotetramer of two MnmE and two MnmG subunits. K(+) serves as cofactor.

The protein resides in the cytoplasm. Functionally, exhibits a very high intrinsic GTPase hydrolysis rate. Involved in the addition of a carboxymethylaminomethyl (cmnm) group at the wobble position (U34) of certain tRNAs, forming tRNA-cmnm(5)s(2)U34. The sequence is that of tRNA modification GTPase MnmE from Acinetobacter baylyi (strain ATCC 33305 / BD413 / ADP1).